The chain runs to 224 residues: Glycerol-3-phosphate acyltransferase (224 aa).

6 consecutive transmembrane segments (helical) span residues 4–24 (FVIV…GSIN), 60–80 (LVIF…VYFV), 88–108 (SVVV…FPIW), 124–144 (IISV…LIII), 149–169 (IVSF…FIPW), and 182–202 (WPWW…IWSH).

This sequence belongs to the PlsY family. As to quaternary structure, probably interacts with PlsX.

It localises to the cell membrane. The catalysed reaction is an acyl phosphate + sn-glycerol 3-phosphate = a 1-acyl-sn-glycero-3-phosphate + phosphate. Its pathway is lipid metabolism; phospholipid metabolism. Its function is as follows. Catalyzes the transfer of an acyl group from acyl-phosphate (acyl-PO(4)) to glycerol-3-phosphate (G3P) to form lysophosphatidic acid (LPA). This enzyme utilizes acyl-phosphate as fatty acyl donor, but not acyl-CoA or acyl-ACP. The polypeptide is Glycerol-3-phosphate acyltransferase (Mycoplasmopsis pulmonis (strain UAB CTIP) (Mycoplasma pulmonis)).